Reading from the N-terminus, the 241-residue chain is GTP cyclohydrolase 1 (241 aa).

A propeptide spanning residues 1-11 is cleaved from the precursor; that stretch reads MEKPRGVRCTN. The segment at 1–58 is disordered; the sequence is MEKPRGVRCTNGFPERELPRPGASRPAEKSRPPEAKGAQPADAWKAGRPRSEEDNELN. A phosphoserine mark is found at Ser-51 and Ser-72. Positions 132, 135, and 203 each coordinate Zn(2+).

It belongs to the GTP cyclohydrolase I family. As to quaternary structure, toroid-shaped homodecamer, composed of two pentamers of five dimers. Interacts with AHSA1 and GCHFR/GFRP. Post-translationally, phosphorylated.

It localises to the cytoplasm. The protein resides in the nucleus. The catalysed reaction is GTP + H2O = 7,8-dihydroneopterin 3'-triphosphate + formate + H(+). The protein operates within cofactor biosynthesis; 7,8-dihydroneopterin triphosphate biosynthesis; 7,8-dihydroneopterin triphosphate from GTP: step 1/1. With respect to regulation, GTP shows a positive allosteric effect, and tetrahydrobiopterin inhibits the enzyme activity. Zinc is required for catalytic activity. Inhibited by Mg(2+). Functionally, may positively regulate nitric oxide synthesis in endothelial cells. May be involved in dopamine synthesis. May modify pain sensitivity and persistence. The protein is GTP cyclohydrolase 1 (Gch1) of Rattus norvegicus (Rat).